A 288-amino-acid polypeptide reads, in one-letter code: Shikimate dehydrogenase (NADP(+)) (288 aa).

Residues 15–17 (SKS) and Thr-64 contribute to the shikimate site. The active-site Proton acceptor is Lys-68. Glu-83 contributes to the NADP(+) binding site. Residues Asn-92 and Asp-117 each coordinate shikimate. NADP(+) is bound by residues 141–145 (GAGGA), 165–170 (NRTVSK), and Met-232. Position 234 (Tyr-234) interacts with shikimate. Residue Gly-254 participates in NADP(+) binding.

It belongs to the shikimate dehydrogenase family. Homodimer.

The enzyme catalyses shikimate + NADP(+) = 3-dehydroshikimate + NADPH + H(+). Its pathway is metabolic intermediate biosynthesis; chorismate biosynthesis; chorismate from D-erythrose 4-phosphate and phosphoenolpyruvate: step 4/7. Involved in the biosynthesis of the chorismate, which leads to the biosynthesis of aromatic amino acids. Catalyzes the reversible NADPH linked reduction of 3-dehydroshikimate (DHSA) to yield shikimate (SA). The chain is Shikimate dehydrogenase (NADP(+)) from Psychrobacter cryohalolentis (strain ATCC BAA-1226 / DSM 17306 / VKM B-2378 / K5).